The following is a 142-amino-acid chain: Large ribosomal subunit protein uL11 (142 aa).

It belongs to the universal ribosomal protein uL11 family. In terms of assembly, part of the ribosomal stalk of the 50S ribosomal subunit. Interacts with L10 and the large rRNA to form the base of the stalk. L10 forms an elongated spine to which L12 dimers bind in a sequential fashion forming a multimeric L10(L12)X complex. In terms of processing, one or more lysine residues are methylated.

Forms part of the ribosomal stalk which helps the ribosome interact with GTP-bound translation factors. This Rhodopseudomonas palustris (strain BisB18) protein is Large ribosomal subunit protein uL11.